Consider the following 947-residue polypeptide: Bifunctional glutamine synthetase adenylyltransferase/adenylyl-removing enzyme (947 aa).

Residues 1–440 (MTPLSSPLSQ…VFNELIGDDE (440 aa)) form an adenylyl removase region. The adenylyl transferase stretch occupies residues 450–947 (SEPWREVWQD…ASWRKWLVAV (498 aa)).

This sequence belongs to the GlnE family. Mg(2+) is required as a cofactor.

The catalysed reaction is [glutamine synthetase]-O(4)-(5'-adenylyl)-L-tyrosine + phosphate = [glutamine synthetase]-L-tyrosine + ADP. It catalyses the reaction [glutamine synthetase]-L-tyrosine + ATP = [glutamine synthetase]-O(4)-(5'-adenylyl)-L-tyrosine + diphosphate. Functionally, involved in the regulation of glutamine synthetase GlnA, a key enzyme in the process to assimilate ammonia. When cellular nitrogen levels are high, the C-terminal adenylyl transferase (AT) inactivates GlnA by covalent transfer of an adenylyl group from ATP to specific tyrosine residue of GlnA, thus reducing its activity. Conversely, when nitrogen levels are low, the N-terminal adenylyl removase (AR) activates GlnA by removing the adenylyl group by phosphorolysis, increasing its activity. The regulatory region of GlnE binds the signal transduction protein PII (GlnB) which indicates the nitrogen status of the cell. The polypeptide is Bifunctional glutamine synthetase adenylyltransferase/adenylyl-removing enzyme (Salmonella heidelberg (strain SL476)).